We begin with the raw amino-acid sequence, 479 residues long: Cardiolipin synthase A (479 aa).

2 helical membrane passes run 8 to 28 and 38 to 58; these read FFGYLIGLIHLLGIIAALHAV and IAWALSLLFIPYFTLIPYLIF. 2 PLD phosphodiesterase domains span residues 218-245 and 392-419; these read VNFRNHRKIVVVDGLRGFLGGHNVGDEY and QPGFLHQKVVLVDDEVSAIGSANLDNRS. Catalysis depends on residues histidine 223, lysine 225, aspartate 230, histidine 397, lysine 399, and aspartate 404.

It belongs to the phospholipase D family. Cardiolipin synthase subfamily. ClsA sub-subfamily.

Its subcellular location is the cell inner membrane. The catalysed reaction is 2 a 1,2-diacyl-sn-glycero-3-phospho-(1'-sn-glycerol) = a cardiolipin + glycerol. In terms of biological role, catalyzes the reversible phosphatidyl group transfer from one phosphatidylglycerol molecule to another to form cardiolipin (CL) (diphosphatidylglycerol) and glycerol. The polypeptide is Cardiolipin synthase A (Pseudomonas entomophila (strain L48)).